An 854-amino-acid chain; its full sequence is Zinc finger protein 341 (854 aa).

The segment at 53 to 76 adopts a C2H2-type 1; atypical zinc-finger fold; sequence FLCGKCKKQFNSLPAFMTHKREQC. Residues 152–217 form a disordered region; it reads DQPMPQGPPP…GRPNPGGNGV (66 aa). Polar residues predominate over residues 163–176; it reads QSSLNMHSVPSYLT. The span at 177–210 shows a compositional bias: pro residues; it reads QPPPPPPPPPPLPPPPPPQPPPPPPQSLGPPGRP. C2H2-type zinc fingers lie at residues 322–344 and 350–372; these read LKCSYCDKSFTKNFDLQQHIRSH and FQCIACGRAFAQKSNVKKHMQTH. Residues 399–434 are disordered; the sequence is SRQEDEESTGLGQPLPGAPQPQALSTAGEEEGDKPE. The segment covering 408–422 has biased composition (low complexity); the sequence is GLGQPLPGAPQPQAL. 9 C2H2-type zinc fingers span residues 445–467, 473–497, 503–525, 540–564, 566–588, 594–616, 622–644, 650–677, and 683–705; these read YLCQFCPSKFSTYFQLKSHMTQH, YKCVVKSCAQTFPKLDTFLEHIKSH, YRCHLCGKDFPSLYDLGVHQYSH, YKCVKCVNKYSTPEALEHHLQTATH, FPCPHCQKVFPCERYLRRHLPTH, FKCQVCKKFFRREHYLKLHAHIH, YKCSVCESAFNRKDKLKRHMLIH, YKCPFSTHTGCSKEFNRPDKLKAHILSH, and HKCALCSKSFSRRAHLAEHQRAH. The segment at 731-763 is disordered; it reads CRLGPQKDKDLQTRRPPQRRAAPRSCGSGGRKV.

Belongs to the krueppel C2H2-type zinc-finger protein family. Binds DNA and to the STAT3 promoter.

The protein resides in the nucleus. Transcriptional activator of STAT3 involved in the regulation of immune homeostasis. Also able to activate STAT1 transcription. This Homo sapiens (Human) protein is Zinc finger protein 341 (ZNF341).